Here is a 483-residue protein sequence, read N- to C-terminus: Glutamate--tRNA ligase 1 (483 aa).

The 'HIGH' region motif lies at 9 to 19; it reads PSPTGFLHIGG. Residues 238 to 242 carry the 'KMSKS' region motif; it reads KLSKR. ATP is bound at residue Lys241.

It belongs to the class-I aminoacyl-tRNA synthetase family. Glutamate--tRNA ligase type 1 subfamily. Monomer.

The protein localises to the cytoplasm. It carries out the reaction tRNA(Glu) + L-glutamate + ATP = L-glutamyl-tRNA(Glu) + AMP + diphosphate. Functionally, catalyzes the attachment of glutamate to tRNA(Glu) in a two-step reaction: glutamate is first activated by ATP to form Glu-AMP and then transferred to the acceptor end of tRNA(Glu). This Bartonella henselae (strain ATCC 49882 / DSM 28221 / CCUG 30454 / Houston 1) (Rochalimaea henselae) protein is Glutamate--tRNA ligase 1.